We begin with the raw amino-acid sequence, 163 residues long: MAKIKKIFTNFLRLLALAATVVAIVFMVTSHDSAQVLNLTFTVKYSNTPVFKYFVIAEAIAGGYIVISILLSFKSLFWRLLVILDMVTAVLLTSSISAALAIAQVGKKGNTHAGWLPVCEQVPDFCDQVTIALIAGFAAAIIYFVLLLCSLYVVLSPIFVVTP.

The Cytoplasmic portion of the chain corresponds to 1–6 (MAKIKK). Residues 7–27 (IFTNFLRLLALAATVVAIVFM) traverse the membrane as a helical segment. At 28–52 (VTSHDSAQVLNLTFTVKYSNTPVFK) the chain is on the extracellular side. Residue asparagine 38 is glycosylated (N-linked (GlcNAc...) asparagine). The helical transmembrane segment at 53–73 (YFVIAEAIAGGYIVISILLSF) threads the bilayer. The Cytoplasmic segment spans residues 74-79 (KSLFWR). A helical membrane pass occupies residues 80–100 (LLVILDMVTAVLLTSSISAAL). Topologically, residues 101-128 (AIAQVGKKGNTHAGWLPVCEQVPDFCDQ) are extracellular. The helical transmembrane segment at 129–149 (VTIALIAGFAAAIIYFVLLLC) threads the bilayer. At 150-163 (SLYVVLSPIFVVTP) the chain is on the cytoplasmic side.

It belongs to the Casparian strip membrane proteins (CASP) family. In terms of assembly, homodimer and heterodimers.

It localises to the cell membrane. The sequence is that of CASP-like protein 1C3 from Populus trichocarpa (Western balsam poplar).